A 165-amino-acid polypeptide reads, in one-letter code: Large ribosomal subunit protein uL10 (165 aa).

This sequence belongs to the universal ribosomal protein uL10 family. As to quaternary structure, part of the ribosomal stalk of the 50S ribosomal subunit. The N-terminus interacts with L11 and the large rRNA to form the base of the stalk. The C-terminus forms an elongated spine to which L12 dimers bind in a sequential fashion forming a multimeric L10(L12)X complex.

Its function is as follows. Forms part of the ribosomal stalk, playing a central role in the interaction of the ribosome with GTP-bound translation factors. This Halalkalibacterium halodurans (strain ATCC BAA-125 / DSM 18197 / FERM 7344 / JCM 9153 / C-125) (Bacillus halodurans) protein is Large ribosomal subunit protein uL10 (rplJ).